The primary structure comprises 210 residues: Large ribosomal subunit protein uL4 (210 aa).

Residues 46–96 (QGNASTKTRAEVRGGGRKPWRQKGTGRARAGSNRSPLWRGGGVIFGPKPRD) form a disordered region. Residues 60 to 71 (GGRKPWRQKGTG) show a composition bias toward basic residues.

The protein belongs to the universal ribosomal protein uL4 family. Part of the 50S ribosomal subunit.

Its function is as follows. One of the primary rRNA binding proteins, this protein initially binds near the 5'-end of the 23S rRNA. It is important during the early stages of 50S assembly. It makes multiple contacts with different domains of the 23S rRNA in the assembled 50S subunit and ribosome. In terms of biological role, forms part of the polypeptide exit tunnel. In Gloeothece citriformis (strain PCC 7424) (Cyanothece sp. (strain PCC 7424)), this protein is Large ribosomal subunit protein uL4.